Consider the following 416-residue polypeptide: Sulfoquinovosyl glycerol-binding protein SmoF (416 aa).

Positions 1 to 29 (MTLKTIRGKALMGAALCATMLTFSGQAFA) are cleaved as a signal peptide. A 3-(6-sulfo-alpha-D-quinovosyl)glycerol-binding site is contributed by Q40. H41 lines the 6-sulfo-D-quinovose pocket. S71, D95, D141, G194, T248, G303, W304, and R373 together coordinate 3-(6-sulfo-alpha-D-quinovosyl)glycerol. G303, W304, and R373 together coordinate 6-sulfo-D-quinovose.

This sequence belongs to the bacterial solute-binding protein 1 family. In terms of assembly, the complex is probably composed of two ATP-binding proteins (SmoE), two transmembrane proteins (SmoG and SmoH) and a solute-binding protein (SmoF).

It localises to the periplasm. In terms of biological role, part of the ABC transporter complex SmoEFGH involved in sulfoquinovosyl glycerol (SQGro) uptake. Binds sulfoquinovosyl glycerol (SQGro). Can also bind sulfoquinovose (SQ), methyl alpha-sulfoquinovoside (SQMe) and a short-chain derivative of sulfoquinovosyl diacylglycerol (SQDG). Cannot bind D-glucose and D-glucuronic acid. This chain is Sulfoquinovosyl glycerol-binding protein SmoF, found in Agrobacterium fabrum (strain C58 / ATCC 33970) (Agrobacterium tumefaciens (strain C58)).